A 528-amino-acid polypeptide reads, in one-letter code: Peptide chain release factor 3 (528 aa).

Residues 10 to 278 form the tr-type G domain; sequence DKRRTFGIIS…TFVDLAPAPQ (269 aa). Residues 19–26, 87–91, and 141–144 contribute to the GTP site; these read SHPDAGKT, DTPGH, and NKLD.

This sequence belongs to the TRAFAC class translation factor GTPase superfamily. Classic translation factor GTPase family. PrfC subfamily.

Its subcellular location is the cytoplasm. Increases the formation of ribosomal termination complexes and stimulates activities of RF-1 and RF-2. It binds guanine nucleotides and has strong preference for UGA stop codons. It may interact directly with the ribosome. The stimulation of RF-1 and RF-2 is significantly reduced by GTP and GDP, but not by GMP. In Oleidesulfovibrio alaskensis (strain ATCC BAA-1058 / DSM 17464 / G20) (Desulfovibrio alaskensis), this protein is Peptide chain release factor 3.